The following is a 239-amino-acid chain: Pyridoxine 5'-phosphate synthase (239 aa).

N7 contacts 3-amino-2-oxopropyl phosphate. A 1-deoxy-D-xylulose 5-phosphate-binding site is contributed by 9-10; the sequence is DH. Residue R18 coordinates 3-amino-2-oxopropyl phosphate. Residue H43 is the Proton acceptor of the active site. Residues R45 and H50 each contribute to the 1-deoxy-D-xylulose 5-phosphate site. E70 functions as the Proton acceptor in the catalytic mechanism. Residue T100 coordinates 1-deoxy-D-xylulose 5-phosphate. H191 (proton donor) is an active-site residue. Residues G192 and 213-214 each bind 3-amino-2-oxopropyl phosphate; that span reads GH.

It belongs to the PNP synthase family. As to quaternary structure, homooctamer; tetramer of dimers.

It localises to the cytoplasm. The enzyme catalyses 3-amino-2-oxopropyl phosphate + 1-deoxy-D-xylulose 5-phosphate = pyridoxine 5'-phosphate + phosphate + 2 H2O + H(+). The protein operates within cofactor biosynthesis; pyridoxine 5'-phosphate biosynthesis; pyridoxine 5'-phosphate from D-erythrose 4-phosphate: step 5/5. In terms of biological role, catalyzes the complicated ring closure reaction between the two acyclic compounds 1-deoxy-D-xylulose-5-phosphate (DXP) and 3-amino-2-oxopropyl phosphate (1-amino-acetone-3-phosphate or AAP) to form pyridoxine 5'-phosphate (PNP) and inorganic phosphate. This chain is Pyridoxine 5'-phosphate synthase, found in Geobacter metallireducens (strain ATCC 53774 / DSM 7210 / GS-15).